We begin with the raw amino-acid sequence, 257 residues long: Na(+)-translocating NADH-quinone reductase subunit C (257 aa).

A helical membrane pass occupies residues 12–32; the sequence is LFVVIALSLVCSIIVSAAAVG. T225 is modified (FMN phosphoryl threonine).

It belongs to the NqrC family. In terms of assembly, composed of six subunits; NqrA, NqrB, NqrC, NqrD, NqrE and NqrF. FMN serves as cofactor.

It localises to the cell inner membrane. The enzyme catalyses a ubiquinone + n Na(+)(in) + NADH + H(+) = a ubiquinol + n Na(+)(out) + NAD(+). NQR complex catalyzes the reduction of ubiquinone-1 to ubiquinol by two successive reactions, coupled with the transport of Na(+) ions from the cytoplasm to the periplasm. NqrA to NqrE are probably involved in the second step, the conversion of ubisemiquinone to ubiquinol. The protein is Na(+)-translocating NADH-quinone reductase subunit C of Vibrio cholerae serotype O1 (strain ATCC 39541 / Classical Ogawa 395 / O395).